Reading from the N-terminus, the 179-residue chain is Acireductone dioxygenase (179 aa).

Residues His-97, His-99, Glu-103, and His-141 each coordinate Fe(2+). His-97, His-99, Glu-103, and His-141 together coordinate Ni(2+).

It belongs to the acireductone dioxygenase (ARD) family. In terms of assembly, monomer. It depends on Fe(2+) as a cofactor. Ni(2+) is required as a cofactor.

The enzyme catalyses 1,2-dihydroxy-5-(methylsulfanyl)pent-1-en-3-one + O2 = 3-(methylsulfanyl)propanoate + CO + formate + 2 H(+). It catalyses the reaction 1,2-dihydroxy-5-(methylsulfanyl)pent-1-en-3-one + O2 = 4-methylsulfanyl-2-oxobutanoate + formate + 2 H(+). It functions in the pathway amino-acid biosynthesis; L-methionine biosynthesis via salvage pathway; L-methionine from S-methyl-5-thio-alpha-D-ribose 1-phosphate: step 5/6. Functionally, catalyzes 2 different reactions between oxygen and the acireductone 1,2-dihydroxy-3-keto-5-methylthiopentene (DHK-MTPene) depending upon the metal bound in the active site. Fe-containing acireductone dioxygenase (Fe-ARD) produces formate and 2-keto-4-methylthiobutyrate (KMTB), the alpha-ketoacid precursor of methionine in the methionine recycle pathway. Ni-containing acireductone dioxygenase (Ni-ARD) produces methylthiopropionate, carbon monoxide and formate, and does not lie on the methionine recycle pathway. The sequence is that of Acireductone dioxygenase from Gluconacetobacter diazotrophicus (strain ATCC 49037 / DSM 5601 / CCUG 37298 / CIP 103539 / LMG 7603 / PAl5).